A 249-amino-acid polypeptide reads, in one-letter code: Fatty acid elongase 5 (249 aa).

The next 3 membrane-spanning stretches (helical) occupy residues 23 to 43, 68 to 88, and 100 to 120; these read VFVN…VIVL, VALS…GVFN, and WIFV…FIVL. The short motif at 131–135 is the HxxHH motif element; it reads HIYHH. The active-site Nucleophile is histidine 134. 4 consecutive transmembrane segments (helical) span residues 138–158, 159–179, 193–213, and 217–236; these read IGFI…AFFG, AWIN…TSLG, MIQF…HSPI, and WAVL…MRFY.

The protein belongs to the ELO family.

It localises to the membrane. The enzyme catalyses an acyl-CoA + malonyl-CoA + H(+) = a 3-oxoacyl-CoA + CO2 + CoA. It functions in the pathway lipid metabolism; polyunsaturated fatty acid biosynthesis. Involved in the synthesis of fatty acids. Elongates C20 polyunsaturated fatty acids (PUFAs) with a preference for n-6 PUFAs. This is Fatty acid elongase 5 from Leishmania major.